The sequence spans 406 residues: Tyrosine--tRNA ligase (406 aa).

Y35 contributes to the L-tyrosine binding site. A 'HIGH' region motif is present at residues 40–49 (PTADSLHVGH). L-tyrosine-binding residues include Y168 and Q172. The 'KMSKS' region signature appears at 228–232 (KMGKT). ATP is bound at residue K231. One can recognise an S4 RNA-binding domain in the interval 340–404 (SELLDILVEA…RGKKNYNKIV (65 aa)).

Belongs to the class-I aminoacyl-tRNA synthetase family. TyrS type 1 subfamily. Homodimer.

It is found in the cytoplasm. It catalyses the reaction tRNA(Tyr) + L-tyrosine + ATP = L-tyrosyl-tRNA(Tyr) + AMP + diphosphate + H(+). Catalyzes the attachment of tyrosine to tRNA(Tyr) in a two-step reaction: tyrosine is first activated by ATP to form Tyr-AMP and then transferred to the acceptor end of tRNA(Tyr). The protein is Tyrosine--tRNA ligase of Clostridium perfringens (strain ATCC 13124 / DSM 756 / JCM 1290 / NCIMB 6125 / NCTC 8237 / Type A).